Reading from the N-terminus, the 56-residue chain is Large ribosomal subunit protein bL32 (56 aa).

The protein belongs to the bacterial ribosomal protein bL32 family.

This is Large ribosomal subunit protein bL32 from Prochlorococcus marinus (strain MIT 9215).